Here is a 727-residue protein sequence, read N- to C-terminus: MLPGAARSPCLRFPRRFAHGGLAAPRTALWATAWYGIHSKAFTSANSPLRKDASKEPALASNSKTTNPIPTQASASVNPPKDARNATTAKKDLLSETTLANKEQRKADWAIIKEMAKYLWPKDDWGTKLRVGTALSLLVGAKILNVEVPFYFKSIVDSMNIDFATVGGTAYTVAGSMIIAYGVTRIGATLFQELRNAVFASVAQKAIRRVARNVFEHLLRLDLNFHLSRQTGGLTRAIDRGTKGISFLLTSMVFHVVPTALEISLVCGILTYQYGFQFAAITAATMVAYTAFTITTTAWRTKFRKQANAADNRGATVAVDSLINYEAVKYFNNEQYQVARYDKALKAYEDASIKVTTSLAFLNSGQNMIFSSALAAMMYLAANGVANGNLTVGDLVMVNQLVFQLSVPLNFLGSVYRELRQSLLDMETLFNLQKVNVNIKEKPDAKPLQLHKGGEIRFENVTFGYHPDRPILKNASFTIPAGQKFAIVGPSGCGKSTILRLLFRFYDVQEGRILIDDQDVRDVSLESLRKAIGVVPQDTPLFNDTIAHNIRYGRIDATDEEVHKAAQRARIDALIQKLPEGYQTAVGERGMMISGGEKQRLAISRLILKDPELLFFDEATSALDTYTEQALLQNINSILKEKKRTSVFVAHRLRTIYDSDQILVLKDGRVAEMGSHRELLDLNGIYAELWNAQEMSLAQDLEFERETERDDVESKERDMAPGPKAQQ.

A disordered region spans residues 46-97; the sequence is NSPLRKDASKEPALASNSKTTNPIPTQASASVNPPKDARNATTAKKDLLSET. A compositionally biased stretch (polar residues) spans 60-77; it reads ASNSKTTNPIPTQASASV. The segment covering 81 to 94 has biased composition (basic and acidic residues); the sequence is KDARNATTAKKDLL. Residues 131 to 152 form a helical membrane-spanning segment; it reads VGTALSLLVGAKILNVEVPFYF. The region spanning 131–421 is the ABC transmembrane type-1 domain; that stretch reads VGTALSLLVG…LGSVYRELRQ (291 aa). Over 153–175 the chain is Mitochondrial intermembrane; sequence KSIVDSMNIDFATVGGTAYTVAG. The chain crosses the membrane as a helical span at residues 176-199; sequence SMIIAYGVTRIGATLFQELRNAVF. Topologically, residues 200–248 are mitochondrial matrix; sequence ASVAQKAIRRVARNVFEHLLRLDLNFHLSRQTGGLTRAIDRGTKGISFL. Residues 249–272 form a helical membrane-spanning segment; sequence LTSMVFHVVPTALEISLVCGILTY. Position 273 (glutamine 273) is a topological domain, mitochondrial intermembrane. Residues 274 to 294 traverse the membrane as a helical segment; it reads YGFQFAAITAATMVAYTAFTI. Topologically, residues 295 to 360 are mitochondrial matrix; that stretch reads TTTAWRTKFR…ASIKVTTSLA (66 aa). Glutathione contacts are provided by residues 300–304 and 363–366; these read RTKFR and NSGQ. A helical transmembrane segment spans residues 361 to 379; it reads FLNSGQNMIFSSALAAMMY. Residues 380–394 are Mitochondrial intermembrane-facing; the sequence is LAANGVANGNLTVGD. The helical transmembrane segment at 395-416 threads the bilayer; sequence LVMVNQLVFQLSVPLNFLGSVY. Residue glycine 413 coordinates glutathione. The Mitochondrial matrix portion of the chain corresponds to 417-727; the sequence is RELRQSLLDM…DMAPGPKAQQ (311 aa). In terms of domain architecture, ABC transporter spans 456–692; sequence IRFENVTFGY…NGIYAELWNA (237 aa). ATP-binding positions include tyrosine 465 and 489–500; that span reads GPSGCGKSTILR. Residues 702-719 are compositionally biased toward basic and acidic residues; it reads EFERETERDDVESKERDM. The interval 702 to 727 is disordered; the sequence is EFERETERDDVESKERDMAPGPKAQQ.

Belongs to the ABC transporter superfamily. ABCB family. Heavy Metal importer (TC 3.A.1.210) subfamily. In terms of assembly, homodimer.

The protein resides in the mitochondrion inner membrane. Functionally, performs an essential function in the generation of cytoplasmic iron-sulfur proteins by mediating the ATP-dependent export of Fe/S cluster precursors synthesized by nfs1 and other mitochondrial proteins. Hydrolyzes ATP. Binds glutathione and may function by transporting a glutathione-conjugated iron-sulfur compound. The sequence is that of Iron-sulfur clusters transporter atm1, mitochondrial from Aspergillus fumigatus (strain ATCC MYA-4609 / CBS 101355 / FGSC A1100 / Af293) (Neosartorya fumigata).